Consider the following 327-residue polypeptide: Ubiquinone biosynthesis O-methyltransferase, mitochondrial (327 aa).

Residues R79, G142, D165, and F210 each contribute to the S-adenosyl-L-methionine site. E211, E214, and H215 together coordinate Mg(2+).

It belongs to the class I-like SAM-binding methyltransferase superfamily. UbiG/COQ3 family. In terms of assembly, component of a multi-subunit COQ enzyme complex, composed of at least COQ3, COQ4, COQ5, COQ6, COQ7 and COQ9. Requires Mg(2+) as cofactor.

It localises to the mitochondrion inner membrane. It carries out the reaction a 3,4-dihydroxy-5-(all-trans-polyprenyl)benzoate + S-adenosyl-L-methionine = a 4-hydroxy-3-methoxy-5-(all-trans-polyprenyl)benzoate + S-adenosyl-L-homocysteine + H(+). It catalyses the reaction a 3-demethylubiquinone + S-adenosyl-L-methionine = a ubiquinone + S-adenosyl-L-homocysteine. The enzyme catalyses a 3-demethylubiquinol + S-adenosyl-L-methionine = a ubiquinol + S-adenosyl-L-homocysteine + H(+). It functions in the pathway cofactor biosynthesis; ubiquinone biosynthesis. O-methyltransferase required for two non-consecutive steps during ubiquinone biosynthesis. Catalyzes the 2 O-methylation of 3,4-dihydroxy-5-(all-trans-polyprenyl)benzoic acid into 4-hydroxy-3-methoxy-5-(all-trans-polyprenyl)benzoic acid. Also catalyzes the last step of ubiquinone biosynthesis by mediating methylation of 3-demethylubiquinone into ubiquinone. Also able to mediate the methylation of 3-demethylubiquinol into ubiquinol. In Candida albicans (Yeast), this protein is Ubiquinone biosynthesis O-methyltransferase, mitochondrial.